The primary structure comprises 107 residues: Iron-binding protein IscA (107 aa).

Positions 35, 99, and 101 each coordinate Fe cation.

The protein belongs to the HesB/IscA family. Homodimer; may form tetramers and higher multimers. Fe cation is required as a cofactor.

Functionally, is able to transfer iron-sulfur clusters to apo-ferredoxin. Multiple cycles of [2Fe2S] cluster formation and transfer are observed, suggesting that IscA acts catalytically. Recruits intracellular free iron so as to provide iron for the assembly of transient iron-sulfur cluster in IscU in the presence of IscS, L-cysteine and the thioredoxin reductase system TrxA/TrxB. The protein is Iron-binding protein IscA of Enterobacter sp. (strain 638).